The sequence spans 647 residues: Putative lipase atg15 (647 aa).

At 1–18 (MLPSGKRKADAFSCTSAA) the chain is on the cytoplasmic side. A helical; Signal-anchor for type II membrane protein membrane pass occupies residues 19 to 39 (RVTAKLALSFLALSTTPLVNA). The Lumenal segment spans residues 40–647 (FSYEEPNAQI…EGGEGPVNDL (608 aa)). N-linked (GlcNAc...) asparagine glycosylation is found at Asn-203, Asn-225, Asn-283, and Asn-307. The active-site Charge relay system is the Ser-323. N-linked (GlcNAc...) asparagine glycosylation is present at Asn-469. Residues 597 to 626 (APALPSSVLTPSATATPPEGQPDDSGKRCR) form a disordered region.

The protein belongs to the AB hydrolase superfamily. Lipase family. As to quaternary structure, binds to both phosphatidylinositol (PI) and phosphatidylinositol 3,5-bisphosphate (PIP2).

It is found in the endosome. The protein resides in the multivesicular body membrane. Its subcellular location is the prevacuolar compartment membrane. It catalyses the reaction a triacylglycerol + H2O = a diacylglycerol + a fatty acid + H(+). Its function is as follows. Lipase which is essential for lysis of subvacuolar cytoplasm to vacuole targeted bodies and intravacuolar autophagic bodies. Involved in the lysis of intravacuolar multivesicular body (MVB) vesicles. The intravacuolar membrane disintegration by atg15 is critical to life span extension. The polypeptide is Putative lipase atg15 (atg15) (Neurospora crassa (strain ATCC 24698 / 74-OR23-1A / CBS 708.71 / DSM 1257 / FGSC 987)).